Consider the following 90-residue polypeptide: Mitochondrial import inner membrane translocase subunit Tim8 A (90 aa).

Residues 36–59 (CWDKCMDKPGPKLDSRAEMCFVNC) carry the Twin CX3C motif motif. 2 disulfides stabilise this stretch: Cys36–Cys59 and Cys40–Cys55.

It belongs to the small Tim family. Heterohexamer; composed of 3 copies of TIMM8A and 3 copies of TIMM13, named soluble 70 kDa complex. Associates with the TIM22 complex, whose core is composed of TIMM22.

It is found in the mitochondrion inner membrane. In terms of biological role, mitochondrial intermembrane chaperone that participates in the import and insertion of some multi-pass transmembrane proteins into the mitochondrial inner membrane. Also required for the transfer of beta-barrel precursors from the TOM complex to the sorting and assembly machinery (SAM complex) of the outer membrane. Acts as a chaperone-like protein that protects the hydrophobic precursors from aggregation and guide them through the mitochondrial intermembrane space. The TIMM8-TIMM13 complex mediates the import of some proteins while the predominant TIMM9-TIMM10 70 kDa complex mediates the import of much more proteins. The protein is Mitochondrial import inner membrane translocase subunit Tim8 A (timm8a) of Takifugu rubripes (Japanese pufferfish).